A 356-amino-acid chain; its full sequence is Protein RecA (356 aa).

78–85 (GPESSGKT) is a binding site for ATP.

Belongs to the RecA family.

It is found in the cytoplasm. Can catalyze the hydrolysis of ATP in the presence of single-stranded DNA, the ATP-dependent uptake of single-stranded DNA by duplex DNA, and the ATP-dependent hybridization of homologous single-stranded DNAs. It interacts with LexA causing its activation and leading to its autocatalytic cleavage. The protein is Protein RecA of Paracoccus denitrificans.